Consider the following 515-residue polypeptide: Maturase K (515 aa).

Belongs to the intron maturase 2 family. MatK subfamily.

It localises to the plastid. Its subcellular location is the chloroplast. Usually encoded in the trnK tRNA gene intron. Probably assists in splicing its own and other chloroplast group II introns. The polypeptide is Maturase K (Pinus leiophylla (Chihuahua pine)).